A 284-amino-acid polypeptide reads, in one-letter code: Tropomyosin (284 aa).

The stretch at 1-273 (MEAIKKKMQA…KEKYKSISDE (273 aa)) forms a coiled coil.

The protein belongs to the tropomyosin family. As to quaternary structure, homodimer. As to expression, ubiquitous, but especially prevalent in the anterior muscle bundles associated with legs. Expression in the mid and posterior regions is probably related to the numerous, small muscle bundles associated with the digestive and reproductive systems (at protein level).

In terms of biological role, tropomyosin, in association with the troponin complex, plays a central role in the calcium dependent regulation of muscle contraction. The sequence is that of Tropomyosin from Psoroptes ovis (Sheep scab mite).